A 341-amino-acid chain; its full sequence is Tetraacyldisaccharide 4'-kinase (341 aa).

Thr54–Thr61 lines the ATP pocket.

Belongs to the LpxK family.

The catalysed reaction is a lipid A disaccharide + ATP = a lipid IVA + ADP + H(+). It functions in the pathway glycolipid biosynthesis; lipid IV(A) biosynthesis; lipid IV(A) from (3R)-3-hydroxytetradecanoyl-[acyl-carrier-protein] and UDP-N-acetyl-alpha-D-glucosamine: step 6/6. Transfers the gamma-phosphate of ATP to the 4'-position of a tetraacyldisaccharide 1-phosphate intermediate (termed DS-1-P) to form tetraacyldisaccharide 1,4'-bis-phosphate (lipid IVA). The protein is Tetraacyldisaccharide 4'-kinase of Brucella melitensis biotype 1 (strain ATCC 23456 / CCUG 17765 / NCTC 10094 / 16M).